Reading from the N-terminus, the 903-residue chain is Protein translocase subunit SecA (903 aa).

Residues glutamine 87, 105 to 109, and aspartate 513 contribute to the ATP site; that span reads GEGKT. Residues 840-853 are compositionally biased toward basic and acidic residues; the sequence is MEAQRRAQAEEAAR. The disordered stretch occupies residues 840–903; sequence MEAQRRAQAE…KYKQCHGQIN (64 aa). Zn(2+) contacts are provided by cysteine 887, cysteine 889, cysteine 898, and histidine 899.

This sequence belongs to the SecA family. As to quaternary structure, monomer and homodimer. Part of the essential Sec protein translocation apparatus which comprises SecA, SecYEG and auxiliary proteins SecDF-YajC and YidC. It depends on Zn(2+) as a cofactor.

The protein localises to the cell inner membrane. It is found in the cytoplasm. It catalyses the reaction ATP + H2O + cellular proteinSide 1 = ADP + phosphate + cellular proteinSide 2.. Functionally, part of the Sec protein translocase complex. Interacts with the SecYEG preprotein conducting channel. Has a central role in coupling the hydrolysis of ATP to the transfer of proteins into and across the cell membrane, serving both as a receptor for the preprotein-SecB complex and as an ATP-driven molecular motor driving the stepwise translocation of polypeptide chains across the membrane. The polypeptide is Protein translocase subunit SecA (Vibrio cholerae serotype O1 (strain M66-2)).